A 428-amino-acid chain; its full sequence is Tyrosine--tRNA ligase (428 aa).

Tyrosine 41 contributes to the L-tyrosine binding site. A 'HIGH' region motif is present at residues 46 to 55 (PTADSLHLGH). Residues tyrosine 179 and glutamine 183 each coordinate L-tyrosine. A 'KMSKS' region motif is present at residues 239–243 (KFGKT). Lysine 242 provides a ligand contact to ATP. One can recognise an S4 RNA-binding domain in the interval 361–418 (ADLMQALVDSELQPSRGQARKTIASNAITINGEKQSDPEYTFSDSDRLFGRYTLLRRG).

The protein belongs to the class-I aminoacyl-tRNA synthetase family. TyrS type 1 subfamily. Homodimer.

Its subcellular location is the cytoplasm. It carries out the reaction tRNA(Tyr) + L-tyrosine + ATP = L-tyrosyl-tRNA(Tyr) + AMP + diphosphate + H(+). Functionally, catalyzes the attachment of tyrosine to tRNA(Tyr) in a two-step reaction: tyrosine is first activated by ATP to form Tyr-AMP and then transferred to the acceptor end of tRNA(Tyr). This Cronobacter sakazakii (strain ATCC BAA-894) (Enterobacter sakazakii) protein is Tyrosine--tRNA ligase.